The sequence spans 147 residues: 3-hydroxyacyl-[acyl-carrier-protein] dehydratase FabZ (147 aa).

H46 is an active-site residue.

The protein belongs to the thioester dehydratase family. FabZ subfamily.

It localises to the cytoplasm. The catalysed reaction is a (3R)-hydroxyacyl-[ACP] = a (2E)-enoyl-[ACP] + H2O. Its function is as follows. Involved in unsaturated fatty acids biosynthesis. Catalyzes the dehydration of short chain beta-hydroxyacyl-ACPs and long chain saturated and unsaturated beta-hydroxyacyl-ACPs. The chain is 3-hydroxyacyl-[acyl-carrier-protein] dehydratase FabZ from Syntrophobacter fumaroxidans (strain DSM 10017 / MPOB).